The sequence spans 185 residues: Large ribosomal subunit protein uL5 (185 aa).

It belongs to the universal ribosomal protein uL5 family. As to quaternary structure, part of the 50S ribosomal subunit; part of the 5S rRNA/L5/L18/L25 subcomplex. Contacts the 5S rRNA and the P site tRNA. Forms a bridge to the 30S subunit in the 70S ribosome.

Its function is as follows. This is one of the proteins that bind and probably mediate the attachment of the 5S RNA into the large ribosomal subunit, where it forms part of the central protuberance. In the 70S ribosome it contacts protein S13 of the 30S subunit (bridge B1b), connecting the 2 subunits; this bridge is implicated in subunit movement. Contacts the P site tRNA; the 5S rRNA and some of its associated proteins might help stabilize positioning of ribosome-bound tRNAs. This chain is Large ribosomal subunit protein uL5, found in Bartonella tribocorum (strain CIP 105476 / IBS 506).